Consider the following 606-residue polypeptide: V-type proton ATPase catalytic subunit A (606 aa).

An N-acetylalanine modification is found at A2. A240 to V247 contributes to the ATP binding site.

It belongs to the ATPase alpha/beta chains family. As to quaternary structure, V-ATPase is a heteromultimeric enzyme made up of two complexes: the ATP-hydrolytic V1 complex and the proton translocation V0 complex. The V1 complex consists of three catalytic AB heterodimers that form a heterohexamer, three peripheral stalks each consisting of EG heterodimers, one central rotor including subunits D and F, and the regulatory subunits C and H. The proton translocation complex V0 consists of the proton transport subunit a, a ring of proteolipid subunits c9c'', rotary subunit d, subunits e and f, and the accessory subunits vah-19/Ac45 and vah-20/PRR. As to expression, expressed in proximal but not distal germ cells.

The enzyme catalyses ATP + H2O + 4 H(+)(in) = ADP + phosphate + 5 H(+)(out). With respect to regulation, ATP hydrolysis occurs at the interface between the nucleotide-binding domains of subunits A and B. ATP hydrolysis triggers a conformational change in the subunits D and F, which induces a shift of subunit d. The c-ring is subsequently rotated and results in a continuous proton translocation across the membrane. Catalytic subunit of the V1 complex of vacuolar(H+)-ATPase (V-ATPase), a multisubunit enzyme composed of a peripheral complex (V1) that hydrolyzes ATP and a membrane integral complex (V0) that translocates protons. V-ATPase is responsible for acidifying and maintaining the pH of intracellular compartments and in some cell types, is targeted to the plasma membrane, where it is responsible for acidifying the extracellular environment. Required along with other vacuolar ATPase components for the removal of protein aggregates which form in immature oocytes in the distal gonad. This removal occurs as the oocytes mature and move to the proximal gonad, is triggered by the introduction of sperm through mating and occurs before fertilization. The introduction of sperm triggers V-ATPase accumulation in proximal oocytes and induces lysosomal acidification which leads to engulfing of protein aggregates by lysosomes and subsequent clearance of the aggregates. Lysosomal acidification also leads to changes in mitochondrial morphology and function. Mitochondria in distal immature oocytes are fragmented, produce high levels of reactive oxygen species (ROS) and have high membrane potential, indicative of metabolic inactivity. In contrast, mitochondria in proximal mature oocytes are tubular with lower ROS levels and membrane potential, indicative of an active metabolic state required for aggregate mobilization before clearance. Involved in receptor-mediated endocytosis. The protein is V-type proton ATPase catalytic subunit A of Caenorhabditis elegans.